Reading from the N-terminus, the 108-residue chain is Small ribosomal subunit protein eS25A (108 aa).

The span at 1–20 shows a compositional bias: low complexity; sequence MPPKQQLSKAAKAAAALAGG. The segment at 1-30 is disordered; that stretch reads MPPKQQLSKAAKAAAALAGGKKSKKKWSKK. At P2 the chain carries N,N-dimethylproline; by NTM1. Basic residues predominate over residues 21–30; sequence KKSKKKWSKK.

This sequence belongs to the eukaryotic ribosomal protein eS25 family. In terms of assembly, component of the small ribosomal subunit (SSU). Mature yeast ribosomes consist of a small (40S) and a large (60S) subunit. The 40S small subunit contains 1 molecule of ribosomal RNA (18S rRNA) and 33 different proteins (encoded by 57 genes). The large 60S subunit contains 3 rRNA molecules (25S, 5.8S and 5S rRNA) and 46 different proteins (encoded by 81 genes).

The protein localises to the cytoplasm. Its function is as follows. Component of the ribosome, a large ribonucleoprotein complex responsible for the synthesis of proteins in the cell. The small ribosomal subunit (SSU) binds messenger RNAs (mRNAs) and translates the encoded message by selecting cognate aminoacyl-transfer RNA (tRNA) molecules. The large subunit (LSU) contains the ribosomal catalytic site termed the peptidyl transferase center (PTC), which catalyzes the formation of peptide bonds, thereby polymerizing the amino acids delivered by tRNAs into a polypeptide chain. The nascent polypeptides leave the ribosome through a tunnel in the LSU and interact with protein factors that function in enzymatic processing, targeting, and the membrane insertion of nascent chains at the exit of the ribosomal tunnel. The protein is Small ribosomal subunit protein eS25A of Saccharomyces cerevisiae (strain ATCC 204508 / S288c) (Baker's yeast).